Reading from the N-terminus, the 100-residue chain is uncharacterized protein (100 aa).

Transmembrane regions (helical) follow at residues 9–29 (VYTY…SWVV), 41–61 (PYLI…ITAP), and 72–92 (SIPF…FLGI).

It localises to the membrane. This is an uncharacterized protein from Saccharomyces cerevisiae (strain ATCC 204508 / S288c) (Baker's yeast).